Reading from the N-terminus, the 646-residue chain is A-kinase anchor protein 8-like (646 aa).

The interval 1–268 (MSYTGFVQGS…MRRTWKTWTT (268 aa)) is sufficient for activation of CTE-mediated expression. Asymmetric dimethylarginine; alternate is present on arginine 208. Arginine 208 carries the post-translational modification Omega-N-methylarginine; alternate. 3 positions are modified to omega-N-methylarginine: arginine 217, arginine 237, and arginine 247. The residue at position 257 (lysine 257) is an N6-acetyllysine. A disordered region spans residues 264–381 (KTWTTADFRT…QDKQKKRQRD (118 aa)). Threonine 267 bears the Phosphothreonine mark. A Nuclear localization signal motif is present at residues 274-279 (KKKKRK). The Nuclear export signal (NES) signature appears at 280-296 (QGGSPDEPDSKATRTDC). Serine 283 bears the Phosphoserine mark. Basic and acidic residues predominate over residues 287–296 (PDSKATRTDC). Threonine 292 carries the post-translational modification Phosphothreonine. The residue at position 297 (serine 297) is a Phosphoserine. The segment covering 298-314 (DNSDSDNDEGTEGEATE) has biased composition (acidic residues). Over residues 337 to 349 (EDGREEGKEDPEK) the composition is skewed to basic and acidic residues. A Nuclear localization signal motif is present at residues 362–364 (KRK). 2 consecutive C2H2 AKAP95-type zinc fingers follow at residues 391-413 (CSLC…SKFH) and 484-507 (CAAC…TMDH). Residues 545–646 (GENPFTDSPE…DDEEGGGGAP (102 aa)) are disordered. Phosphoserine is present on serine 552. The span at 552–563 (SPEEEKEQEEAE) shows a compositional bias: acidic residues. Over residues 564–586 (GGALDEGAQGEAAGISEGAEGVP) the composition is skewed to low complexity. Residues 587–607 (AQPPVPPEPAPGAVSPPPPPP) show a composition bias toward pro residues. The span at 634–646 (DVEDDEEGGGGAP) shows a compositional bias: acidic residues.

It belongs to the AKAP95 family. In terms of assembly, interacts (via N-terminus) with DHX9 (via RGG region). Interacts with TMPO isoform Beta, PRPF40A, RNF43, lamin-B. Interacts with HDAC3; increased during mitosis. Interacts with EBV EBNA-LP. Interacts with HIV-1 reverse transcriptase/ribonuclease H. In terms of processing, phosphorylated on serine or threonine residues possibly by PKA; probably modulating the interaction with TMPO isoform Beta. In terms of tissue distribution, ubiquitously expressed. Expressed in the brain cortex (at protein level).

It localises to the nucleus. Its subcellular location is the nucleus matrix. The protein resides in the nucleus speckle. It is found in the PML body. The protein localises to the cytoplasm. Functionally, could play a role in constitutive transport element (CTE)-mediated gene expression by association with DHX9. Increases CTE-dependent nuclear unspliced mRNA export. Proposed to target PRKACA to the nucleus but does not seem to be implicated in the binding of regulatory subunit II of PKA. May be involved in nuclear envelope breakdown and chromatin condensation. May be involved in anchoring nuclear membranes to chromatin in interphase and in releasing membranes from chromating at mitosis. May regulate the initiation phase of DNA replication when associated with TMPO isoform Beta. Required for cell cycle G2/M transition and histone deacetylation during mitosis. In mitotic cells recruits HDAC3 to the vicinity of chromatin leading to deacetylation and subsequent phosphorylation at 'Ser-10' of histone H3; in this function seems to act redundantly with AKAP8. May be involved in regulation of pre-mRNA splicing. (Microbial infection) In case of EBV infection, may target PRKACA to EBNA-LP-containing nuclear sites to modulate transcription from specific promoters. In terms of biological role, (Microbial infection) Can synergize with DHX9 to activate the CTE-mediated gene expression of type D retroviruses. Its function is as follows. (Microbial infection) In case of HIV-1 infection, involved in the DHX9-promoted annealing of host tRNA(Lys3) to viral genomic RNA as a primer in reverse transcription; in vitro negatively regulates DHX9 annealing activity. The protein is A-kinase anchor protein 8-like (AKAP8L) of Homo sapiens (Human).